Consider the following 126-residue polypeptide: Holo-[acyl-carrier-protein] synthase (126 aa).

Mg(2+) is bound by residues aspartate 9 and glutamate 58.

It belongs to the P-Pant transferase superfamily. AcpS family. Mg(2+) serves as cofactor.

It localises to the cytoplasm. It catalyses the reaction apo-[ACP] + CoA = holo-[ACP] + adenosine 3',5'-bisphosphate + H(+). Functionally, transfers the 4'-phosphopantetheine moiety from coenzyme A to a Ser of acyl-carrier-protein. The polypeptide is Holo-[acyl-carrier-protein] synthase (Escherichia coli O17:K52:H18 (strain UMN026 / ExPEC)).